A 117-amino-acid chain; its full sequence is Large ribosomal subunit protein uL18 (117 aa).

This sequence belongs to the universal ribosomal protein uL18 family. In terms of assembly, part of the 50S ribosomal subunit; part of the 5S rRNA/L5/L18/L25 subcomplex. Contacts the 5S and 23S rRNAs.

Its function is as follows. This is one of the proteins that bind and probably mediate the attachment of the 5S RNA into the large ribosomal subunit, where it forms part of the central protuberance. The sequence is that of Large ribosomal subunit protein uL18 from Nitrosococcus oceani (strain ATCC 19707 / BCRC 17464 / JCM 30415 / NCIMB 11848 / C-107).